Consider the following 201-residue polypeptide: Pro-P-factor (201 aa).

The N-terminal stretch at 1 to 20 (MKITAVIALLFSLAAASPIP) is a signal peptide. 5 consecutive propeptides follow at residues 21 to 31 (VADPGVVSVSK), 58 to 65 (EFEAAPAK), 92 to 99 (EFEAAPEK), 126 to 133 (EFEAAPAK), and 160 to 201 (TEED…KFES). N187 and N194 each carry an N-linked (GlcNAc...) asparagine glycan.

Proteolytically cleaved by kpr, probably at the C-terminal side of dibasic Lys-Arg residues. Post-translationally, glycosylated. Most of the precursor molecules are glycosylated on at least one site, but only a small proportion are glycosylated on both sites.

Its subcellular location is the secreted. Functionally, in h- cells under nutritional starvation, P-factor induces alteration of cell morphology toward mating, arrest of the cell cycle at the G1 phase prior to the initiation of DNA synthesis and indirect transcriptional activation of the sxa2 gene which down-regulates the signaling pathway. This is Pro-P-factor (map2) from Schizosaccharomyces pombe (strain 972 / ATCC 24843) (Fission yeast).